Consider the following 277-residue polypeptide: Venom serine protease (277 aa).

The signal sequence occupies residues 1–19 (MNCGKIILLFITIIGVAKS). The Peptidase S1 domain maps to 34-269 (IVNGVETEIN…FMEFIHNATI (236 aa)). Cys-60 and Cys-76 are disulfide-bonded. The active-site Charge relay system is the His-75. 2 N-linked (GlcNAc...) asparagine glycosylation sites follow: Asn-84 and Asn-104. Asp-126 (charge relay system) is an active-site residue. Residues Asn-155 and Asn-158 are each glycosylated (N-linked (GlcNAc...) asparagine). Disulfide bonds link Cys-192-Cys-207 and Cys-216-Cys-246. Asn-218 carries N-linked (GlcNAc...) asparagine glycosylation. The active-site Charge relay system is Ser-220. N-linked (GlcNAc...) asparagine glycosylation is present at Asn-266.

It belongs to the peptidase S1 family. Expressed by the venom duct.

It localises to the secreted. In Polistes dominula (European paper wasp), this protein is Venom serine protease.